The sequence spans 134 residues: Ribonuclease VapC2 (134 aa).

In terms of domain architecture, PINc spans 3 to 124 (YMLDTNICVY…TNNIKEFKRI (122 aa)). Asp6 contacts Mg(2+).

This sequence belongs to the PINc/VapC protein family. As to quaternary structure, forms complexes with VapB2; probably VapC2(4):VapB2(2) in the absence of DNA, and VapC2(4):VapB2(4) in the presence of DNA. Crystallizes as heterodimers with stoichiometry VapC2(4):VapB2(4) in the presence of its probable promoter DNA. The heterodimers are in contact via alternative VapC-VapC and VapB-VapB interactions. This subunit does not contact DNA. It depends on Mg(2+) as a cofactor.

In terms of biological role, toxic component of a type II toxin-antitoxin (TA) system. Has ssRNase activity. Upon expression in E.coli or S.cerevisiae inhibits growth in liquid culture; in S.cerevisiae its expression leads to apoptosis-like characteristics. Rapidly induces apoptosis (within 2 hours) upon microinjection into mouse fibroblasts (L929 line); pretreatment of cells with dexamethasone protects them. Probably contributes to host cell death if bacterial cell lysis occurs during host infection. Its toxic effect is neutralized by coexpression with cognate antitoxin VapB2, its RNase activity is partially inhibited in vitro by VapB2. This is Ribonuclease VapC2 from Rickettsia felis (strain ATCC VR-1525 / URRWXCal2) (Rickettsia azadi).